Here is a 74-residue protein sequence, read N- to C-terminus: Homeobox protein Hox-B8 (74 aa).

A compositionally biased stretch (low complexity) spans 1-24 (YTDCKLAASGLGEEAESSEQSPSP). The segment at 1-28 (YTDCKLAASGLGEEAESSEQSPSPTQLF) is disordered. The Antp-type hexapeptide signature appears at 27–32 (LFPWMR). Positions 39-74 (RRRGRQTYSRYQTLELEKEFLFNPYLTRKRRIEVSR) form a DNA-binding region, homeobox.

The protein belongs to the Antp homeobox family.

It is found in the nucleus. In terms of biological role, sequence-specific transcription factor which is part of a developmental regulatory system that provides cells with specific positional identities on the anterior-posterior axis. The chain is Homeobox protein Hox-B8 (HOXB8) from Gallus gallus (Chicken).